The chain runs to 336 residues: Ornithine carbamoyltransferase, catabolic (336 aa).

Carbamoyl phosphate contacts are provided by residues 57-60, Gln84, Arg108, and 135-138; these read STRT and HPTQ. Residues Asn168, Asp232, and 236–237 each bind L-ornithine; that span reads SM. Carbamoyl phosphate-binding positions include 274–275 and Arg321; that span reads CL.

This sequence belongs to the aspartate/ornithine carbamoyltransferase superfamily. OTCase family.

It is found in the cytoplasm. It carries out the reaction carbamoyl phosphate + L-ornithine = L-citrulline + phosphate + H(+). Its pathway is amino-acid degradation; L-arginine degradation via ADI pathway; carbamoyl phosphate from L-arginine: step 2/2. Reversibly catalyzes the transfer of the carbamoyl group from carbamoyl phosphate (CP) to the N(epsilon) atom of ornithine (ORN) to produce L-citrulline. This Burkholderia pseudomallei (strain K96243) protein is Ornithine carbamoyltransferase, catabolic.